We begin with the raw amino-acid sequence, 171 residues long: PIDD1 alternative open reading frame protein (171 aa).

Disordered regions lie at residues 1-22 (MSGLQGPSVGDGCNGGGARAGG) and 76-156 (ILAS…LCPA). The span at 84-99 (GPSAAGGHPGPAASEP) shows a compositional bias: low complexity.

As to quaternary structure, interacts with calpain-2 catalytic subunit CAPN2. Cleaved in vitro following UV irradiation to induce caspase-mediated apoptosis and this cleavage is inhibited by a broad-spectrum caspase inhibitor.

The protein resides in the cytoplasm. The protein localises to the cytoskeleton. This chain is PIDD1 alternative open reading frame protein, found in Homo sapiens (Human).